We begin with the raw amino-acid sequence, 125 residues long: Protein ApaG (125 aa).

In terms of domain architecture, ApaG spans M1 to N125.

This is Protein ApaG from Sodalis glossinidius (strain morsitans).